The sequence spans 474 residues: Coiled-coil domain-containing protein 174 (474 aa).

2 disordered regions span residues 39 to 86 and 129 to 170; these read GVFG…REKL and GATR…PSEE. Composition is skewed to basic and acidic residues over residues 64–86 and 129–142; these read RAEKDAEQKLEEQKTLDKSREKL and GATRDSRIKEERDA. The stretch at 64 to 98 forms a coiled coil; the sequence is RAEKDAEQKLEEQKTLDKSREKLEEKAKLYEKMTK. The span at 148-157 shows a compositional bias: acidic residues; sequence NDDDDEEEFS. The residue at position 206 (Ser-206) is a Phosphoserine. Residues 276–317 are a coiled coil; the sequence is LEMLREQTTDQRIKRENIKEKRKAILEARLAKLRQKKMKKSK. Disordered regions lie at residues 309 to 372 and 389 to 461; these read RQKK…IREW and ELRA…VTFQ. Basic and acidic residues-rich tracts occupy residues 316-327 and 356-372; these read SKVDGTEEESRA and IQERKDSKPGVPHIREW. The segment covering 410-419 has biased composition (polar residues); sequence RTGSLSSQPW. Over residues 430-453 the composition is skewed to low complexity; the sequence is GHSSGQSQEPSSSHTSTPASESSP.

The protein localises to the nucleus. Functionally, probably involved in neuronal development. The sequence is that of Coiled-coil domain-containing protein 174 (Ccdc174) from Rattus norvegicus (Rat).